The sequence spans 498 residues: Lysine--tRNA ligase (498 aa).

2 residues coordinate Mg(2+): glutamate 408 and glutamate 415.

The protein belongs to the class-II aminoacyl-tRNA synthetase family. Homodimer. Mg(2+) serves as cofactor.

It is found in the cytoplasm. The enzyme catalyses tRNA(Lys) + L-lysine + ATP = L-lysyl-tRNA(Lys) + AMP + diphosphate. The polypeptide is Lysine--tRNA ligase (Listeria welshimeri serovar 6b (strain ATCC 35897 / DSM 20650 / CCUG 15529 / CIP 8149 / NCTC 11857 / SLCC 5334 / V8)).